We begin with the raw amino-acid sequence, 178 residues long: Large ribosomal subunit protein uL6 (178 aa).

It belongs to the universal ribosomal protein uL6 family. In terms of assembly, part of the 50S ribosomal subunit.

In terms of biological role, this protein binds to the 23S rRNA, and is important in its secondary structure. It is located near the subunit interface in the base of the L7/L12 stalk, and near the tRNA binding site of the peptidyltransferase center. In Coxiella burnetii (strain CbuK_Q154) (Coxiella burnetii (strain Q154)), this protein is Large ribosomal subunit protein uL6.